Reading from the N-terminus, the 249-residue chain is Mannose-binding protein A (249 aa).

Positions 1–20 are cleaved as a signal peptide; sequence MLLFSSLPVLLLCVVTASYS. Positions 41–102 are disordered; sequence VTNGTPGRDG…KGDPGDTSGV (62 aa). Residues 48–60 show a composition bias toward basic and acidic residues; it reads RDGRDGPKGEKGE. P54 carries the post-translational modification 4-hydroxyproline. Residues K55 and K58 each carry the 5-hydroxylysine modification. O-linked (Gal...) hydroxylysine glycosylation is found at K55 and K58. 4 positions are modified to 4-hydroxyproline: P61, P72, P78, and P89. Residues 64–98 enclose the Collagen-like domain; the sequence is GFRGSQGPPGKMGPPGNIGETGPLGPKGQKGDPGD. K90 and K93 each carry 5-hydroxylysine. 2 O-linked (Gal...) hydroxylysine glycosylation sites follow: K90 and K93. The 112-residue stretch at 135 to 246 folds into the C-type lectin domain; it reads SRKKLYVTNG…CSSSFLAVCE (112 aa). Disulfide bonds link C156–C245 and C223–C237. 9 residues coordinate Ca(2+): D189, E193, E213, N215, D216, E221, D222, N233, and D234. A calcium-dependent carbohydrate binding region spans residues 213 to 221; it reads EPNDHGSGE.

Interacts with MASP1 and MASP2. Forms oligomeric complexes of 3, 4, 5 or, predominantly, 6 homotrimers. The homotrimers appear as globular heads that are connected to a central hub by thin stalks. In terms of processing, hydroxylated on lysine and proline residues within the collagen-like domain. Post-translationally, O-glycosylated. O-linked glycans on hydroxylysine residues consist of Glc-Gal disaccharides bound to the oxygen atom of post-translationally added hydroxyl groups. As to expression, detected in blood serum (at protein level). Expressed in liver. Weakly expressed in lung, testis and brain. Not detected in bone marrow and heart.

The protein localises to the secreted. Calcium-dependent lectin. Plays a role in the innate immune response by binding mannose, fucose and N-acetylglucosamine on bacteria, including strains of A.suis, H.parasuis and A.pleuropneumoniae, and activates the lectin complement pathway. According to some authors, it only binds mannose. The protein is Mannose-binding protein A of Sus scrofa (Pig).